The chain runs to 189 residues: Ribosome maturation factor RimM (189 aa).

The PRC barrel domain maps to 96 to 169; that stretch reads EDEFYYADLE…TLLIDPLAAG (74 aa).

The protein belongs to the RimM family. As to quaternary structure, binds ribosomal protein uS19.

Its subcellular location is the cytoplasm. Functionally, an accessory protein needed during the final step in the assembly of 30S ribosomal subunit, possibly for assembly of the head region. Essential for efficient processing of 16S rRNA. May be needed both before and after RbfA during the maturation of 16S rRNA. It has affinity for free ribosomal 30S subunits but not for 70S ribosomes. This Rhizobium johnstonii (strain DSM 114642 / LMG 32736 / 3841) (Rhizobium leguminosarum bv. viciae) protein is Ribosome maturation factor RimM.